Here is a 694-residue protein sequence, read N- to C-terminus: E3 ubiquitin-protein ligase SPL11 (694 aa).

Positions 1-12 (MAGDRAEEEEGE) are enriched in acidic residues. Disordered stretches follow at residues 1–21 (MAGD…ARAA) and 343–363 (NGME…ACSS). The U-box domain maps to 272–346 (TIPDEFRCPI…SQWCETNGME (75 aa)). Residues 350 to 363 (RSTQPNKPTPACSS) are compositionally biased toward polar residues. ARM repeat units lie at residues 398–438 (NANN…NLSI), 439–479 (HEDN…SLSV), 480–520 (IDEY…NLCI), 521–561 (YQGN…ILSS), 562–602 (HPEG…HLCS), and 603–650 (GEHH…FLVQ). Over residues 650–667 (QQQEEQESQSQASAQVPP) the composition is skewed to low complexity. The tract at residues 650–694 (QQQEEQESQSQASAQVPPQATPEQVPENDIPEQLDSPASQYPMVV) is disordered.

As to quaternary structure, interacts with SPIN1 (via N-terminus). As to expression, highly expressed in leaf, at intermediate levels in shoot and weakly in root.

Its subcellular location is the nucleus. The protein localises to the cytoplasm. The enzyme catalyses S-ubiquitinyl-[E2 ubiquitin-conjugating enzyme]-L-cysteine + [acceptor protein]-L-lysine = [E2 ubiquitin-conjugating enzyme]-L-cysteine + N(6)-ubiquitinyl-[acceptor protein]-L-lysine.. Its pathway is protein modification; protein ubiquitination. In terms of biological role, E3 ubiquitin-protein ligase that negatively regulates programmed cell death and disease resistance. Participates in flowering time control by mediating ubiquitination and subsequent proteasomal degradation of SPIN1. This chain is E3 ubiquitin-protein ligase SPL11 (SPL11), found in Oryza sativa subsp. japonica (Rice).